We begin with the raw amino-acid sequence, 89 residues long: Small ribosomal subunit protein uS15 (89 aa).

The protein belongs to the universal ribosomal protein uS15 family. Part of the 30S ribosomal subunit. Forms a bridge to the 50S subunit in the 70S ribosome, contacting the 23S rRNA.

One of the primary rRNA binding proteins, it binds directly to 16S rRNA where it helps nucleate assembly of the platform of the 30S subunit by binding and bridging several RNA helices of the 16S rRNA. Its function is as follows. Forms an intersubunit bridge (bridge B4) with the 23S rRNA of the 50S subunit in the ribosome. The protein is Small ribosomal subunit protein uS15 of Prochlorococcus marinus (strain MIT 9215).